The following is a 281-amino-acid chain: 2-dehydro-3-deoxyphosphooctonate aldolase (281 aa).

Belongs to the KdsA family.

The protein resides in the cytoplasm. It catalyses the reaction D-arabinose 5-phosphate + phosphoenolpyruvate + H2O = 3-deoxy-alpha-D-manno-2-octulosonate-8-phosphate + phosphate. It participates in carbohydrate biosynthesis; 3-deoxy-D-manno-octulosonate biosynthesis; 3-deoxy-D-manno-octulosonate from D-ribulose 5-phosphate: step 2/3. Its pathway is bacterial outer membrane biogenesis; lipopolysaccharide biosynthesis. The sequence is that of 2-dehydro-3-deoxyphosphooctonate aldolase from Pseudomonas fluorescens (strain ATCC BAA-477 / NRRL B-23932 / Pf-5).